Reading from the N-terminus, the 624-residue chain is DNA (cytosine-5)-methyltransferase DRM1 (624 aa).

UBA domains lie at 57-100 and 108-149; these read RISD…LFNY and SSKS…LLTY. Positions 160–189 are disordered; sequence DMNININDDDDDNLYSLSSDDEEDELNNSS. A compositionally biased stretch (acidic residues) spans 166–185; sequence NDDDDDNLYSLSSDDEEDEL. Residues 188 to 231 form the UBA 3 domain; the sequence is SSNEDRILQALIKMGYLREDAAIAIERCGEDASMEEVVDFICAA. The 332-residue stretch at 291–622 folds into the SAM-dependent MTase DRM-type domain; the sequence is MHRPVPIPDI…EAVRRKARHM (332 aa).

It belongs to the class I-like SAM-binding methyltransferase superfamily. DRM-methyltransferase family.

The protein localises to the nucleus. The enzyme catalyses a 2'-deoxycytidine in DNA + S-adenosyl-L-methionine = a 5-methyl-2'-deoxycytidine in DNA + S-adenosyl-L-homocysteine + H(+). Involved in de novo DNA methylation. Controls asymmetric and CpNpG methylation. Required for FWA gene silencing but not for the maintenance of SUP gene silencing. Functionally redundant to CMT3 to maintain non-CpG methylation. Involved in RNA-directed DNA methylation. In Arabidopsis thaliana (Mouse-ear cress), this protein is DNA (cytosine-5)-methyltransferase DRM1 (DRM1).